The following is a 651-amino-acid chain: UvrABC system protein C (651 aa).

A GIY-YIG domain is found at 20 to 97; the sequence is ERCGVYRMFD…IKKFQPKFNI (78 aa). Residues 207–242 enclose the UVR domain; the sequence is KALQENLSKKMEELSSQMRFEEAAEIRDRIKALSYV.

This sequence belongs to the UvrC family. In terms of assembly, interacts with UvrB in an incision complex.

It localises to the cytoplasm. In terms of biological role, the UvrABC repair system catalyzes the recognition and processing of DNA lesions. UvrC both incises the 5' and 3' sides of the lesion. The N-terminal half is responsible for the 3' incision and the C-terminal half is responsible for the 5' incision. The polypeptide is UvrABC system protein C (Rickettsia akari (strain Hartford)).